The primary structure comprises 697 residues: DNA ligase (697 aa).

Residues 41–45 (DPVYD), 90–91 (SL), and Glu129 each bind NAD(+). Lys131 serves as the catalytic N6-AMP-lysine intermediate. Arg152, Glu189, Lys308, and Lys332 together coordinate NAD(+). Zn(2+) contacts are provided by Cys426, Cys429, Cys444, and Cys449. The 81-residue stretch at 617-697 (AANHHLTGST…ALQNMLRGST (81 aa)) folds into the BRCT domain.

It belongs to the NAD-dependent DNA ligase family. LigA subfamily. Mg(2+) is required as a cofactor. Requires Mn(2+) as cofactor.

It carries out the reaction NAD(+) + (deoxyribonucleotide)n-3'-hydroxyl + 5'-phospho-(deoxyribonucleotide)m = (deoxyribonucleotide)n+m + AMP + beta-nicotinamide D-nucleotide.. Its function is as follows. DNA ligase that catalyzes the formation of phosphodiester linkages between 5'-phosphoryl and 3'-hydroxyl groups in double-stranded DNA using NAD as a coenzyme and as the energy source for the reaction. It is essential for DNA replication and repair of damaged DNA. The chain is DNA ligase from Synechococcus sp. (strain CC9311).